The following is a 324-amino-acid chain: Glyoxylate/hydroxypyruvate reductase B (324 aa).

Residues arginine 237 and glutamate 266 contribute to the active site. Residue histidine 285 is the Proton donor of the active site.

It belongs to the D-isomer specific 2-hydroxyacid dehydrogenase family. GhrB subfamily. Homodimer.

The protein localises to the cytoplasm. The enzyme catalyses glycolate + NADP(+) = glyoxylate + NADPH + H(+). It carries out the reaction (R)-glycerate + NAD(+) = 3-hydroxypyruvate + NADH + H(+). The catalysed reaction is (R)-glycerate + NADP(+) = 3-hydroxypyruvate + NADPH + H(+). In terms of biological role, catalyzes the NADPH-dependent reduction of glyoxylate and hydroxypyruvate into glycolate and glycerate, respectively. In Salmonella agona (strain SL483), this protein is Glyoxylate/hydroxypyruvate reductase B.